Consider the following 344-residue polypeptide: Ketol-acid reductoisomerase (NADP(+)) (344 aa).

The region spanning 2-181 is the KARI N-terminal Rossmann domain; sequence AKVLYEKDIQ…GAARAGVLET (180 aa). NADP(+) is bound by residues 25–28, Arg48, Ser52, and 82–85; these read YGSQ and DEMQ. The active site involves His107. Gly133 serves as a coordination point for NADP(+). Positions 182–327 constitute a KARI C-terminal knotted domain; sequence SFQEETETDL…RELRELMPFV (146 aa). Positions 190, 194, 226, and 230 each coordinate Mg(2+). Ser251 provides a ligand contact to substrate.

Belongs to the ketol-acid reductoisomerase family. Mg(2+) is required as a cofactor.

The catalysed reaction is (2R)-2,3-dihydroxy-3-methylbutanoate + NADP(+) = (2S)-2-acetolactate + NADPH + H(+). It catalyses the reaction (2R,3R)-2,3-dihydroxy-3-methylpentanoate + NADP(+) = (S)-2-ethyl-2-hydroxy-3-oxobutanoate + NADPH + H(+). It participates in amino-acid biosynthesis; L-isoleucine biosynthesis; L-isoleucine from 2-oxobutanoate: step 2/4. It functions in the pathway amino-acid biosynthesis; L-valine biosynthesis; L-valine from pyruvate: step 2/4. In terms of biological role, involved in the biosynthesis of branched-chain amino acids (BCAA). Catalyzes an alkyl-migration followed by a ketol-acid reduction of (S)-2-acetolactate (S2AL) to yield (R)-2,3-dihydroxy-isovalerate. In the isomerase reaction, S2AL is rearranged via a Mg-dependent methyl migration to produce 3-hydroxy-3-methyl-2-ketobutyrate (HMKB). In the reductase reaction, this 2-ketoacid undergoes a metal-dependent reduction by NADPH to yield (R)-2,3-dihydroxy-isovalerate. The polypeptide is Ketol-acid reductoisomerase (NADP(+)) (Oceanobacillus iheyensis (strain DSM 14371 / CIP 107618 / JCM 11309 / KCTC 3954 / HTE831)).